Reading from the N-terminus, the 240-residue chain is tRNA1(Val) (adenine(37)-N6)-methyltransferase (240 aa).

Belongs to the methyltransferase superfamily. tRNA (adenine-N(6)-)-methyltransferase family.

The protein localises to the cytoplasm. It carries out the reaction adenosine(37) in tRNA1(Val) + S-adenosyl-L-methionine = N(6)-methyladenosine(37) in tRNA1(Val) + S-adenosyl-L-homocysteine + H(+). Its function is as follows. Specifically methylates the adenine in position 37 of tRNA(1)(Val) (anticodon cmo5UAC). This chain is tRNA1(Val) (adenine(37)-N6)-methyltransferase, found in Christiangramia forsetii (strain DSM 17595 / CGMCC 1.15422 / KT0803) (Gramella forsetii).